Consider the following 94-residue polypeptide: Ig kappa-B5 chain V region 2699 (94 aa).

Residues 1-23 (AFELTQTPSSVEAAVGGTVTINC) are framework-1. A complementarity-determining-1 region spans residues 24–34 (QASTDISSNLA). Positions 35–49 (WYTPKPGSPPKLLIY) are framework-2. Residues 50-56 (SASTLAS) are complementarity-determining-2. The segment at 57-82 (GVSSRFKGSGSGVLITLTISDLECGV) is framework-3. Residue Ser-83 is a region of interest, complementarity-determining-3. Residues 84 to 93 (FGGGTKVVVE) form a framework-4 region.

The sequence is that of Ig kappa-B5 chain V region 2699 from Oryctolagus cuniculus (Rabbit).